The primary structure comprises 469 residues: UDP-glycosyltransferase 43 (469 aa).

Residues S280, 345-346 (WV), 363-371 (HCGWNSILE), and 385-388 (YSEQ) each bind UDP-alpha-D-glucose.

Belongs to the UDP-glycosyltransferase family.

With respect to regulation, inhibited by Cu(2+) or Zn(2+). Functionally, glycosyltransferase that catalyzes the C-glucosylation of daidzein to puerarin. Shows activity with the isoflavones daidzein and genistein, but has no activity towards flavonoids such as 2-hydroxynaringenin. Can use UDP-glucose, but not UDP-galactose or UDP-glucuronic acid as sugar donor. Does not require bivalent cations for activity. The sequence is that of UDP-glycosyltransferase 43 from Pueraria montana var. lobata (Kudzu vine).